We begin with the raw amino-acid sequence, 174 residues long: DNA replication inhibitor plutonium (174 aa).

ANK repeat units lie at residues 39 to 68 (YGNTALLKACYLGRFECARTLLEFGANIFA) and 72 to 103 (FGQNALTLATYAGHLTLVKELLRRRSYKDFNL). Position 167 is a phosphothreonine (Thr167).

Inhibits DNA replication early in developments. May bind and block the action of a replication or initiation factor. This Drosophila melanogaster (Fruit fly) protein is DNA replication inhibitor plutonium (plu).